The chain runs to 100 residues: NADH-quinone oxidoreductase subunit K (100 aa).

3 consecutive transmembrane segments (helical) span residues 4–24, 29–49, and 63–83; these read ITYY…GVLV, LVVF…FVAF, and FFVI…VIAV.

This sequence belongs to the complex I subunit 4L family. NDH-1 is composed of 14 different subunits. Subunits NuoA, H, J, K, L, M, N constitute the membrane sector of the complex.

It localises to the cell inner membrane. It catalyses the reaction a quinone + NADH + 5 H(+)(in) = a quinol + NAD(+) + 4 H(+)(out). Functionally, NDH-1 shuttles electrons from NADH, via FMN and iron-sulfur (Fe-S) centers, to quinones in the respiratory chain. The immediate electron acceptor for the enzyme in this species is believed to be ubiquinone. Couples the redox reaction to proton translocation (for every two electrons transferred, four hydrogen ions are translocated across the cytoplasmic membrane), and thus conserves the redox energy in a proton gradient. The chain is NADH-quinone oxidoreductase subunit K from Myxococcus xanthus (strain DK1622).